We begin with the raw amino-acid sequence, 411 residues long: ATPase family AAA domain-containing protein 3C (411 aa).

177-184 (GPPGTGKT) lines the ATP pocket.

It belongs to the AAA ATPase family.

This is ATPase family AAA domain-containing protein 3C (ATAD3C) from Homo sapiens (Human).